Here is a 232-residue protein sequence, read N- to C-terminus: Large ribosomal subunit protein uL1 (232 aa).

Belongs to the universal ribosomal protein uL1 family. In terms of assembly, part of the 50S ribosomal subunit.

Its function is as follows. Binds directly to 23S rRNA. The L1 stalk is quite mobile in the ribosome, and is involved in E site tRNA release. In terms of biological role, protein L1 is also a translational repressor protein, it controls the translation of the L11 operon by binding to its mRNA. The chain is Large ribosomal subunit protein uL1 from Hahella chejuensis (strain KCTC 2396).